Here is a 150-residue protein sequence, read N- to C-terminus: Putative HTH-type transcriptional regulator HI_0379 (150 aa).

Positions 2 to 131 constitute an HTH rrf2-type domain; the sequence is KLTSKGRYAV…NEITLAELVN (130 aa).

The polypeptide is Putative HTH-type transcriptional regulator HI_0379 (Haemophilus influenzae (strain ATCC 51907 / DSM 11121 / KW20 / Rd)).